The following is a 174-amino-acid chain: Crossover junction endodeoxyribonuclease RuvC (174 aa).

Catalysis depends on residues aspartate 8, glutamate 68, and aspartate 140. Residues aspartate 8, glutamate 68, and aspartate 140 each contribute to the Mg(2+) site.

Belongs to the RuvC family. As to quaternary structure, homodimer which binds Holliday junction (HJ) DNA. The HJ becomes 2-fold symmetrical on binding to RuvC with unstacked arms; it has a different conformation from HJ DNA in complex with RuvA. In the full resolvosome a probable DNA-RuvA(4)-RuvB(12)-RuvC(2) complex forms which resolves the HJ. Mg(2+) is required as a cofactor.

It is found in the cytoplasm. The enzyme catalyses Endonucleolytic cleavage at a junction such as a reciprocal single-stranded crossover between two homologous DNA duplexes (Holliday junction).. The RuvA-RuvB-RuvC complex processes Holliday junction (HJ) DNA during genetic recombination and DNA repair. Endonuclease that resolves HJ intermediates. Cleaves cruciform DNA by making single-stranded nicks across the HJ at symmetrical positions within the homologous arms, yielding a 5'-phosphate and a 3'-hydroxyl group; requires a central core of homology in the junction. The consensus cleavage sequence is 5'-(A/T)TT(C/G)-3'. Cleavage occurs on the 3'-side of the TT dinucleotide at the point of strand exchange. HJ branch migration catalyzed by RuvA-RuvB allows RuvC to scan DNA until it finds its consensus sequence, where it cleaves and resolves the cruciform DNA. In Legionella pneumophila (strain Paris), this protein is Crossover junction endodeoxyribonuclease RuvC.